The primary structure comprises 173 residues: Co-chaperone protein HscB homolog (173 aa).

The region spanning 5-77 (CHFAQFDLQP…PRRALYLLTL (73 aa)) is the J domain.

The protein belongs to the HscB family. In terms of assembly, interacts with HscA and stimulates its ATPase activity.

Functionally, co-chaperone involved in the maturation of iron-sulfur cluster-containing proteins. Seems to help targeting proteins to be folded toward HscA. This chain is Co-chaperone protein HscB homolog, found in Pseudomonas paraeruginosa (strain DSM 24068 / PA7) (Pseudomonas aeruginosa (strain PA7)).